Here is a 229-residue protein sequence, read N- to C-terminus: Ribonuclease 3 (229 aa).

The 123-residue stretch at 5–127 (LSRLERQLGY…LIGAIYLDAG (123 aa)) folds into the RNase III domain. E40 serves as a coordination point for Mg(2+). The active site involves D44. Mg(2+)-binding residues include D113 and E116. E116 is an active-site residue. A DRBM domain is found at 154-224 (DPKTRLQEFL…AAAALIALGV (71 aa)).

This sequence belongs to the ribonuclease III family. Homodimer. Mg(2+) serves as cofactor.

Its subcellular location is the cytoplasm. The enzyme catalyses Endonucleolytic cleavage to 5'-phosphomonoester.. Functionally, digests double-stranded RNA. Involved in the processing of primary rRNA transcript to yield the immediate precursors to the large and small rRNAs (23S and 16S). Processes some mRNAs, and tRNAs when they are encoded in the rRNA operon. Processes pre-crRNA and tracrRNA of type II CRISPR loci if present in the organism. The chain is Ribonuclease 3 from Pseudomonas fluorescens (strain ATCC BAA-477 / NRRL B-23932 / Pf-5).